A 557-amino-acid chain; its full sequence is Formate--tetrahydrofolate ligase 2 (557 aa).

Threonine 66–threonine 73 is a binding site for ATP.

It belongs to the formate--tetrahydrofolate ligase family.

The catalysed reaction is (6S)-5,6,7,8-tetrahydrofolate + formate + ATP = (6R)-10-formyltetrahydrofolate + ADP + phosphate. It participates in one-carbon metabolism; tetrahydrofolate interconversion. This Streptococcus pyogenes serotype M12 (strain MGAS9429) protein is Formate--tetrahydrofolate ligase 2.